We begin with the raw amino-acid sequence, 335 residues long: Phosphate acyltransferase (335 aa).

Belongs to the PlsX family. In terms of assembly, homodimer. Probably interacts with PlsY.

The protein resides in the cytoplasm. It carries out the reaction a fatty acyl-[ACP] + phosphate = an acyl phosphate + holo-[ACP]. It participates in lipid metabolism; phospholipid metabolism. Functionally, catalyzes the reversible formation of acyl-phosphate (acyl-PO(4)) from acyl-[acyl-carrier-protein] (acyl-ACP). This enzyme utilizes acyl-ACP as fatty acyl donor, but not acyl-CoA. This chain is Phosphate acyltransferase, found in Streptococcus equi subsp. zooepidemicus (strain H70).